Consider the following 187-residue polypeptide: Sliding-clamp-loader small subunit (187 aa).

The protein belongs to the Tevenvirinae sliding-clamp-loader small subunit family. In terms of assembly, the sliding-clamp-loader consists of 4 large subunits and 1 small subunit. Interacts with the sliding clamp; this interaction allows the sliding-clamp-loader to open the sliding clamp. Part of the replicase complex that includes the DNA polymerase, the polymerase clamp, the clamp loader complex, the single-stranded DNA binding protein, the primase, the helicase and the helicase assembly factor.

In terms of biological role, forms the sliding-clamp-loader together with the small subunit. The clamp loader holds the clamp in an open conformation and places it onto the DNA. The sequence is that of Sliding-clamp-loader small subunit (62) from Escherichia coli (Bacteriophage T4).